Reading from the N-terminus, the 188-residue chain is Elongation factor P (188 aa).

The residue at position 34 (K34) is an N6-(3,6-diaminohexanoyl)-5-hydroxylysine.

The protein belongs to the elongation factor P family. In terms of processing, may be beta-lysylated on the epsilon-amino group of Lys-34 by the combined action of EpmA and EpmB, and then hydroxylated on the C5 position of the same residue by EpmC (if this protein is present). Lysylation is critical for the stimulatory effect of EF-P on peptide-bond formation. The lysylation moiety may extend toward the peptidyltransferase center and stabilize the terminal 3-CCA end of the tRNA. Hydroxylation of the C5 position on Lys-34 may allow additional potential stabilizing hydrogen-bond interactions with the P-tRNA.

Its subcellular location is the cytoplasm. The protein operates within protein biosynthesis; polypeptide chain elongation. Its function is as follows. Involved in peptide bond synthesis. Alleviates ribosome stalling that occurs when 3 or more consecutive Pro residues or the sequence PPG is present in a protein, possibly by augmenting the peptidyl transferase activity of the ribosome. Modification of Lys-34 is required for alleviation. The polypeptide is Elongation factor P (Photobacterium profundum (strain SS9)).